Reading from the N-terminus, the 220-residue chain is Adenylate kinase (220 aa).

12–17 lines the ATP pocket; it reads GAGKGT. The segment at 32 to 62 is NMP; the sequence is STGDIFRDIVKKENDELGKKIKEIMERGELV. AMP is bound by residues Thr-33, Arg-38, 60-62, 88-91, and Gln-95; these read ELV and GYPR. The segment at 129–166 is LID; it reads ARRICPKCGRIYNLISLPPKEDELCDDCKVKLVQREDD. ATP is bound at residue Arg-130. The Zn(2+) site is built by Cys-133 and Cys-136. 139–140 provides a ligand contact to ATP; the sequence is IY. Zn(2+) is bound by residues Cys-153 and Cys-156. 2 residues coordinate AMP: Arg-163 and Arg-174. Ile-202 is a binding site for ATP.

The protein belongs to the adenylate kinase family. As to quaternary structure, monomer.

The protein localises to the cytoplasm. It catalyses the reaction AMP + ATP = 2 ADP. Its pathway is purine metabolism; AMP biosynthesis via salvage pathway; AMP from ADP: step 1/1. Catalyzes the reversible transfer of the terminal phosphate group between ATP and AMP. Plays an important role in cellular energy homeostasis and in adenine nucleotide metabolism. The sequence is that of Adenylate kinase from Thermotoga petrophila (strain ATCC BAA-488 / DSM 13995 / JCM 10881 / RKU-1).